The chain runs to 664 residues: DNA ligase (664 aa).

Residues 32–36 and 80–81 contribute to the NAD(+) site; these read DKEYD and SL. Lysine 122 serves as the catalytic N6-AMP-lysine intermediate. NAD(+) contacts are provided by arginine 144, glutamate 178, and lysine 314. Positions 407, 410, 423, and 429 each coordinate Zn(2+). Residues 587–664 form the BRCT domain; the sequence is IDENPFMGKT…NEEEFSNKIK (78 aa).

This sequence belongs to the NAD-dependent DNA ligase family. LigA subfamily. Mg(2+) serves as cofactor. The cofactor is Mn(2+).

It catalyses the reaction NAD(+) + (deoxyribonucleotide)n-3'-hydroxyl + 5'-phospho-(deoxyribonucleotide)m = (deoxyribonucleotide)n+m + AMP + beta-nicotinamide D-nucleotide.. DNA ligase that catalyzes the formation of phosphodiester linkages between 5'-phosphoryl and 3'-hydroxyl groups in double-stranded DNA using NAD as a coenzyme and as the energy source for the reaction. It is essential for DNA replication and repair of damaged DNA. This Clostridium botulinum (strain 657 / Type Ba4) protein is DNA ligase.